An 810-amino-acid chain; its full sequence is F-BAR domain only protein 2 (810 aa).

The 248-residue stretch at 3–250 (MAYFVENFWG…NMANTTVESL (248 aa)) folds into the F-BAR domain. Residues 3–274 (MAYFVENFWG…PGLIEFEECD (272 aa)) form a mediates dimerization and binding to membranes enriched in Pi(4,5)-P2 and induces their tubulation region. Positions 87–156 (HLDLVRKLQE…CVEQERLKKE (70 aa)) form a coiled coil. Residue lysine 297 forms a Glycyl lysine isopeptide (Lys-Gly) (interchain with G-Cter in SUMO2) linkage. Positions 301-352 (DAESVECPDADSLNIPDVDEEGYSIKPETNQNDTKENHFYSSSDSDSEDEEP) are disordered. Serine 312 is subject to Phosphoserine. A Phosphothreonine modification is found at threonine 385. A phosphoserine mark is found at serine 387, serine 394, and serine 403. Residues 404 to 537 (NEELTKSKPS…VSRGPSPVSL (134 aa)) form a disordered region. Low complexity predominate over residues 433–456 (PSLDSSSSSSLTSSSSARPTTPLS). 7 positions are modified to phosphoserine: serine 488, serine 493, serine 496, serine 508, serine 510, serine 511, and serine 533. Over residues 502–521 (PLARAESSSSISSSASLSAA) the composition is skewed to low complexity. A mediates interaction with DAB2, EPS15, EPS15R and ITSN1 region spans residues 521–810 (ANTPTVGVSR…FATGRYLADC (290 aa)). The MHD domain occupies 542–809 (TLPVAVALTE…RFATGRYLAD (268 aa)).

The protein belongs to the FCHO family. In terms of assembly, homodimer; disulfide-linked. May form homotetramer. Interacts with AP2A1. Interacts with EPS15, EPS15R, ITSN1 and ITSN2; recruit those scaffolding proteins which in turn may interact with the adaptor protein complex AP-2 at the plasma membrane. Interacts with DAB2 (via DPF motifs); mediates LDL receptor/LDLR endocytosis. In terms of processing, ubiquitinated. Mainly undergoes monoubiquitination but also polyubiquitination.

The protein localises to the membrane. It is found in the clathrin-coated pit. Functionally, functions in an early step of clathrin-mediated endocytosis. Has both a membrane binding/bending activity and the ability to recruit proteins essential to the formation of functional clathrin-coated pits. Has a lipid-binding activity with a preference for membranes enriched in phosphatidylserine and phosphoinositides (Pi(4,5) biphosphate) like the plasma membrane. Its membrane-bending activity might be important for the subsequent action of clathrin and adaptors in the formation of clathrin-coated vesicles. Involved in adaptor protein complex AP-2-dependent endocytosis of the transferrin receptor, it also functions in the AP-2-independent endocytosis of the LDL receptor. The chain is F-BAR domain only protein 2 (FCHO2) from Homo sapiens (Human).